The chain runs to 521 residues: GMP synthase [glutamine-hydrolyzing] (521 aa).

Residues 9–203 form the Glutamine amidotransferase type-1 domain; sequence KILILDFGSQ…ISGICQCEKN (195 aa). Catalysis depends on Cys86, which acts as the Nucleophile. Residues His177 and Glu179 contribute to the active site. Residues 204–396 enclose the GMPS ATP-PPase domain; sequence WTTDNIIAKL…LSIPPHIIYR (193 aa). An ATP-binding site is contributed by 231 to 237; sequence SGGVDSL.

In terms of assembly, homodimer.

It catalyses the reaction XMP + L-glutamine + ATP + H2O = GMP + L-glutamate + AMP + diphosphate + 2 H(+). It functions in the pathway purine metabolism; GMP biosynthesis; GMP from XMP (L-Gln route): step 1/1. Catalyzes the synthesis of GMP from XMP. This chain is GMP synthase [glutamine-hydrolyzing], found in Ruthia magnifica subsp. Calyptogena magnifica.